Here is a 508-residue protein sequence, read N- to C-terminus: Photosystem II CP47 reaction center protein (508 aa).

The next 6 helical transmembrane spans lie at 21–36, 101–115, 140–156, 203–218, 237–252, and 457–472; these read SVHLMHTALVSGWAGS, IILSGLLFLAAIWHW, GIHLFLSGVLCFSFGAF, IAAGVLGILAGLFHLS, VLSSSIAAVFFAAFVV, and TFALIFFFGHIWHGAR.

This sequence belongs to the PsbB/PsbC family. PsbB subfamily. PSII is composed of 1 copy each of membrane proteins PsbA, PsbB, PsbC, PsbD, PsbE, PsbF, PsbH, PsbI, PsbJ, PsbK, PsbL, PsbM, PsbT, PsbX, PsbY, PsbZ, Psb30/Ycf12, at least 3 peripheral proteins of the oxygen-evolving complex and a large number of cofactors. It forms dimeric complexes. Binds multiple chlorophylls. PSII binds additional chlorophylls, carotenoids and specific lipids. is required as a cofactor.

It localises to the plastid. The protein localises to the chloroplast thylakoid membrane. Functionally, one of the components of the core complex of photosystem II (PSII). It binds chlorophyll and helps catalyze the primary light-induced photochemical processes of PSII. PSII is a light-driven water:plastoquinone oxidoreductase, using light energy to abstract electrons from H(2)O, generating O(2) and a proton gradient subsequently used for ATP formation. This is Photosystem II CP47 reaction center protein from Adiantum capillus-veneris (Maidenhair fern).